A 129-amino-acid polypeptide reads, in one-letter code: ATP synthase epsilon chain (129 aa).

It belongs to the ATPase epsilon chain family. In terms of assembly, F-type ATPases have 2 components, CF(1) - the catalytic core - and CF(0) - the membrane proton channel. CF(1) has five subunits: alpha(3), beta(3), gamma(1), delta(1), epsilon(1). CF(0) has three main subunits: a, b and c.

It is found in the cell inner membrane. Functionally, produces ATP from ADP in the presence of a proton gradient across the membrane. In Campylobacter curvus (strain 525.92), this protein is ATP synthase epsilon chain.